The chain runs to 236 residues: Probable 2-phosphosulfolactate phosphatase (236 aa).

This sequence belongs to the ComB family. Mg(2+) serves as cofactor.

It catalyses the reaction (2R)-O-phospho-3-sulfolactate + H2O = (2R)-3-sulfolactate + phosphate. The protein is Probable 2-phosphosulfolactate phosphatase of Gloeobacter violaceus (strain ATCC 29082 / PCC 7421).